The chain runs to 92 residues: Large ribosomal subunit protein eL43 (92 aa).

4 residues coordinate Zn(2+): Cys-39, Cys-42, Cys-57, and Cys-60. The C4-type zinc-finger motif lies at Cys-39–Cys-60.

It belongs to the eukaryotic ribosomal protein eL43 family. Component of the large ribosomal subunit.

Its subcellular location is the cytoplasm. Component of the large ribosomal subunit. The ribosome is a large ribonucleoprotein complex responsible for the synthesis of proteins in the cell. This chain is Large ribosomal subunit protein eL43 (rpl37a), found in Ictalurus punctatus (Channel catfish).